The following is a 144-amino-acid chain: Transcriptional regulator MraZ (144 aa).

2 consecutive SpoVT-AbrB domains span residues 6 to 48 (TYTP…PTDV) and 77 to 120 (ADEG…DPVR).

Belongs to the MraZ family. As to quaternary structure, forms oligomers.

Its subcellular location is the cytoplasm. The protein localises to the nucleoid. The protein is Transcriptional regulator MraZ of Nocardioides sp. (strain ATCC BAA-499 / JS614).